The sequence spans 591 residues: N-acetylgalactosaminyltransferase 7 (591 aa).

Topologically, residues 1 to 11 are cytoplasmic; it reads MRVSTIRSGRI. A helical; Signal-anchor for type II membrane protein transmembrane segment spans residues 12–29; the sequence is CRLALCLLVLLPLLYLLA. Asn-30 is a glycosylation site (N-linked (GlcNAc...) asparagine). Topologically, residues 30-591 are lumenal; it reads NWSDHHKRVQ…WWFKEIRPRW (562 aa). Residues 68–100 are disordered; sequence DGLGNFEPKDVKPRSGPGENGEAHSLSPDKKHM. Intrachain disulfides connect Cys-132–Cys-367, Cys-358–Cys-441, Cys-479–Cys-496, Cys-519–Cys-532, and Cys-558–Cys-573. Positions 141 to 251 are catalytic subdomain A; that stretch reads LPRTSVIIVF…TNWLPPLLAP (111 aa). Substrate is bound by residues Asp-182 and Arg-212. Residues Asp-235 and His-237 each coordinate Mn(2+). The catalytic subdomain B stretch occupies residues 313–375; sequence PYRSPTHAGG…PCSRVGHVYR (63 aa). Substrate is bound at residue Trp-344. Residue His-372 participates in Mn(2+) binding. Residues Arg-375 and Tyr-380 each coordinate substrate. The region spanning 466–585 is the Ricin B-type lectin domain; the sequence is LHWGELRSVA…NDSYQQWWFK (120 aa). N-linked (GlcNAc...) asparagine glycosylation is present at Asn-576.

The protein belongs to the glycosyltransferase 2 family. GalNAc-T subfamily. Mn(2+) is required as a cofactor. As to expression, expressed in developing oocytes and egg chambers. During embryonic stages 9-11, expressed in the primordium of the foregut, midgut and hindgut. Expressed in the salivary glands from embryonic stage 12 onwards. During embryonic stages 12-13, expressed in the posterior midgut and hindgut. During embryonic stages 14-15, expression continues in the hindgut. During embryonic stages 16-17, expressed in the antennomaxillary complex. In third instar larvae, ubiquitously expressed in wing, with increased expression in the notum and ventral wing pouch, eye-antennal, leg and haltere imaginal disks.

The protein resides in the golgi apparatus membrane. The enzyme catalyses L-seryl-[protein] + UDP-N-acetyl-alpha-D-galactosamine = a 3-O-[N-acetyl-alpha-D-galactosaminyl]-L-seryl-[protein] + UDP + H(+). The catalysed reaction is L-threonyl-[protein] + UDP-N-acetyl-alpha-D-galactosamine = a 3-O-[N-acetyl-alpha-D-galactosaminyl]-L-threonyl-[protein] + UDP + H(+). It participates in protein modification; protein glycosylation. Its function is as follows. Glycopeptide transferase involved in O-linked oligosaccharide biosynthesis, which catalyzes the transfer of an N-acetyl-D-galactosamine residue to an already glycosylated peptide. In contrast to other proteins of the family, it does not act as a peptide transferase that transfers GalNAc onto serine or threonine residue on the protein receptor, but instead requires the prior addition of a GalNAc on a peptide before adding additional GalNAc moieties. Some peptide transferase activity is however not excluded, considering that its appropriate peptide substrate may remain unidentified. Prefers the monoglycosylated Muc5AC-3 as substrate. Might have a role in protein O-glycosylation in the Golgi and thereby in establishing and/or maintaining a proper secretory apparatus structure. This chain is N-acetylgalactosaminyltransferase 7, found in Drosophila melanogaster (Fruit fly).